Consider the following 194-residue polypeptide: Peptidyl-tRNA hydrolase (194 aa).

TRNA is bound at residue Y16. The active-site Proton acceptor is the H21. TRNA is bound by residues F66, N68, and N114.

The protein belongs to the PTH family. Monomer.

It is found in the cytoplasm. The catalysed reaction is an N-acyl-L-alpha-aminoacyl-tRNA + H2O = an N-acyl-L-amino acid + a tRNA + H(+). In terms of biological role, hydrolyzes ribosome-free peptidyl-tRNAs (with 1 or more amino acids incorporated), which drop off the ribosome during protein synthesis, or as a result of ribosome stalling. Catalyzes the release of premature peptidyl moieties from peptidyl-tRNA molecules trapped in stalled 50S ribosomal subunits, and thus maintains levels of free tRNAs and 50S ribosomes. This chain is Peptidyl-tRNA hydrolase, found in Geobacter metallireducens (strain ATCC 53774 / DSM 7210 / GS-15).